We begin with the raw amino-acid sequence, 1165 residues long: Immunoglobulin superfamily member 3 (1165 aa).

The N-terminal stretch at 1–20 is a signal peptide; it reads MGTAAGLLLAALLLAGTSWA. Residues 21-1095 lie on the Extracellular side of the membrane; it reads QREVNIQQGP…LQSTICANDA (1075 aa). Ig-like C2-type domains are found at residues 22–139, 144–262, 276–386, 406–527, 545–661, 678–800, 810–934, and 951–1067; these read REVN…AKMN, PDTL…WFPL, PTDK…RGPS, PLRT…WQLL, FAVT…WTQL, PRLQ…EEAS, PDAN…WYKR, and PALQ…WYLL. Intrachain disulfides connect Cys-43–Cys-121 and Cys-168–Cys-246. The EWI motif motif lies at 250–252; it reads EWI. Intrachain disulfides connect Cys-302/Cys-376, Cys-432/Cys-511, Cys-566/Cys-645, Cys-701/Cys-779, Cys-835/Cys-918, and Cys-974/Cys-1051. The chain crosses the membrane as a helical span at residues 1096-1116; that stretch reads LFYLVFFYPFPIFGILIITIL. Over 1117–1165 the chain is Cytoplasmic; the sequence is LVRFRHRPTSKPGEGKNGVPLLWIKEPHLNYSPTCLEPPVLSIHPGTID.

The protein resides in the membrane. This chain is Immunoglobulin superfamily member 3 (igsf3), found in Xenopus laevis (African clawed frog).